We begin with the raw amino-acid sequence, 496 residues long: Adenosylhomocysteinase (496 aa).

Substrate is bound by residues threonine 68, aspartate 157, and glutamate 219. An NAD(+)-binding site is contributed by 220-222 (TTT). The substrate site is built by lysine 249 and aspartate 253. Residues asparagine 254, 283–288 (GYGDVG), glutamate 306, asparagine 341, 362–364 (IGH), and asparagine 410 contribute to the NAD(+) site.

This sequence belongs to the adenosylhomocysteinase family. NAD(+) is required as a cofactor.

The protein localises to the cytoplasm. It catalyses the reaction S-adenosyl-L-homocysteine + H2O = L-homocysteine + adenosine. The protein operates within amino-acid biosynthesis; L-homocysteine biosynthesis; L-homocysteine from S-adenosyl-L-homocysteine: step 1/1. Functionally, may play a key role in the regulation of the intracellular concentration of adenosylhomocysteine. This chain is Adenosylhomocysteinase, found in Mycolicibacterium paratuberculosis (strain ATCC BAA-968 / K-10) (Mycobacterium paratuberculosis).